The sequence spans 896 residues: Trehalose-phosphatase (896 aa).

The interval Met-1–Thr-554 is glycosyltransferase.

This sequence in the N-terminal section; belongs to the glycosyltransferase 20 family. It in the C-terminal section; belongs to the trehalose phosphatase family. In terms of assembly, the trehalose synthase complex is composed of the two catalytic subunits TPS1 and TPS2, and at least one of the two regulatory subunits TPS3 or TSL1. It depends on Mg(2+) as a cofactor.

The protein localises to the cytoplasm. It catalyses the reaction alpha,alpha-trehalose 6-phosphate + H2O = alpha,alpha-trehalose + phosphate. It participates in carbohydrate biosynthesis. Inhibited by EDTA. In terms of biological role, phosphatase catalytic subunit of the trehalose synthase complex that catalyzes the production of trehalose from glucose-6-phosphate and UDP-alpha-D-glucose in a two step process. The sequence is that of Trehalose-phosphatase from Saccharomyces cerevisiae (strain ATCC 204508 / S288c) (Baker's yeast).